We begin with the raw amino-acid sequence, 461 residues long: Chromosomal replication initiator protein DnaA (461 aa).

Residues 1 to 83 are domain I, interacts with DnaA modulators; that stretch reads MDHSPWQRCL…LRFDVGSKPT (83 aa). The interval 83–124 is domain II; that stretch reads TIDNSVTNSPVSRNTGGNESLFAKATSAPKVAEPESNIPKKT. A domain III, AAA+ region region spans residues 125 to 341; the sequence is NVRLNYTFEN…GALNRVIANA (217 aa). ATP-binding residues include Gly169, Gly171, Lys172, and Thr173. The interval 342-461 is domain IV, binds dsDNA; the sequence is NFTGRAITID…YSNLIRTLSS (120 aa).

This sequence belongs to the DnaA family. Oligomerizes as a right-handed, spiral filament on DNA at oriC.

The protein resides in the cytoplasm. In terms of biological role, plays an essential role in the initiation and regulation of chromosomal replication. ATP-DnaA binds to the origin of replication (oriC) to initiate formation of the DNA replication initiation complex once per cell cycle. Binds the DnaA box (a 9 base pair repeat at the origin) and separates the double-stranded (ds)DNA. Forms a right-handed helical filament on oriC DNA; dsDNA binds to the exterior of the filament while single-stranded (ss)DNA is stabiized in the filament's interior. The ATP-DnaA-oriC complex binds and stabilizes one strand of the AT-rich DNA unwinding element (DUE), permitting loading of DNA polymerase. After initiation quickly degrades to an ADP-DnaA complex that is not apt for DNA replication. Binds acidic phospholipids. The polypeptide is Chromosomal replication initiator protein DnaA (Colwellia psychrerythraea (strain 34H / ATCC BAA-681) (Vibrio psychroerythus)).